Consider the following 827-residue polypeptide: Glycerol-3-phosphate acyltransferase (827 aa).

The HXXXXD motif motif lies at 325 to 330 (CHRSHM).

The protein belongs to the GPAT/DAPAT family.

It localises to the cell inner membrane. It catalyses the reaction sn-glycerol 3-phosphate + an acyl-CoA = a 1-acyl-sn-glycero-3-phosphate + CoA. The protein operates within phospholipid metabolism; CDP-diacylglycerol biosynthesis; CDP-diacylglycerol from sn-glycerol 3-phosphate: step 1/3. This Shigella dysenteriae serotype 1 (strain Sd197) protein is Glycerol-3-phosphate acyltransferase.